The chain runs to 632 residues: tRNA uridine 5-carboxymethylaminomethyl modification enzyme MnmG (632 aa).

Residues 15 to 20 (GAGHAG), Val-127, and Ser-182 contribute to the FAD site. The disordered stretch occupies residues 203-226 (TPPRVKSSTIDYSKTEEQPGDDHP). Residues 215–226 (SKTEEQPGDDHP) are compositionally biased toward basic and acidic residues. Residue 274 to 288 (GARYCPSIEDKIVRF) coordinates NAD(+). FAD is bound at residue Gln-371.

This sequence belongs to the MnmG family. As to quaternary structure, homodimer. Heterotetramer of two MnmE and two MnmG subunits. It depends on FAD as a cofactor.

Its subcellular location is the cytoplasm. Its function is as follows. NAD-binding protein involved in the addition of a carboxymethylaminomethyl (cmnm) group at the wobble position (U34) of certain tRNAs, forming tRNA-cmnm(5)s(2)U34. This Listeria monocytogenes serotype 4b (strain F2365) protein is tRNA uridine 5-carboxymethylaminomethyl modification enzyme MnmG.